We begin with the raw amino-acid sequence, 307 residues long: Ribosomal RNA small subunit methyltransferase H (307 aa).

Residues 34-36 (GGH), aspartate 54, phenylalanine 79, aspartate 101, and glutamine 108 contribute to the S-adenosyl-L-methionine site.

Belongs to the methyltransferase superfamily. RsmH family.

The protein localises to the cytoplasm. The enzyme catalyses cytidine(1402) in 16S rRNA + S-adenosyl-L-methionine = N(4)-methylcytidine(1402) in 16S rRNA + S-adenosyl-L-homocysteine + H(+). In terms of biological role, specifically methylates the N4 position of cytidine in position 1402 (C1402) of 16S rRNA. This Vesicomyosocius okutanii subsp. Calyptogena okutanii (strain HA) protein is Ribosomal RNA small subunit methyltransferase H.